The chain runs to 125 residues: Small ribosomal subunit protein uS12 (125 aa).

A disordered region spans residues 9–31 (RQGREVEKIKSKSPAMENSPQRR). 3-methylthioaspartic acid is present on aspartate 89. The tract at residues 106-125 (GVKDRKQSRSKYGAKRPKKA) is disordered. A compositionally biased stretch (basic residues) spans 113-125 (SRSKYGAKRPKKA).

Belongs to the universal ribosomal protein uS12 family. In terms of assembly, part of the 30S ribosomal subunit. Contacts proteins S8 and S17. May interact with IF1 in the 30S initiation complex.

In terms of biological role, with S4 and S5 plays an important role in translational accuracy. Functionally, interacts with and stabilizes bases of the 16S rRNA that are involved in tRNA selection in the A site and with the mRNA backbone. Located at the interface of the 30S and 50S subunits, it traverses the body of the 30S subunit contacting proteins on the other side and probably holding the rRNA structure together. The combined cluster of proteins S8, S12 and S17 appears to hold together the shoulder and platform of the 30S subunit. This Polaromonas sp. (strain JS666 / ATCC BAA-500) protein is Small ribosomal subunit protein uS12.